Here is a 291-residue protein sequence, read N- to C-terminus: Undecaprenyl-diphosphatase (291 aa).

Helical transmembrane passes span 1–21 (MFII…LTEF), 48–68 (SAFT…AWVF), 102–122 (LHVL…DDFI), 126–146 (LFSV…MIIA), 162–182 (ISYF…WPGF), 203–223 (SDFT…LSLL), 231–251 (IADI…GLIA), and 267–287 (FAIY…GFGI).

The protein belongs to the UppP family.

It is found in the cell membrane. It carries out the reaction di-trans,octa-cis-undecaprenyl diphosphate + H2O = di-trans,octa-cis-undecaprenyl phosphate + phosphate + H(+). Its function is as follows. Catalyzes the dephosphorylation of undecaprenyl diphosphate (UPP). Confers resistance to bacitracin. This chain is Undecaprenyl-diphosphatase, found in Staphylococcus aureus (strain MRSA252).